A 105-amino-acid polypeptide reads, in one-letter code: MNPSEMQRKAPPRRRRHRNRAPLTHKMNKMVTSEEQMKLPSTKKAEPPTWAQLKKLTQLATKYLENTKVTQTPESMLLAALMIVSMVSAGVLNSSEETATIENGP.

Residues 1–48 are disordered; that stretch reads MNPSEMQRKAPPRRRRHRNRAPLTHKMNKMVTSEEQMKLPSTKKAEPP. Residues 10–20 are compositionally biased toward basic residues; that stretch reads APPRRRRHRNR. Residues 13–20 carry the Nuclear localization signal motif; that stretch reads RRRRHRNR. Residues 50–59 carry the Nuclear export signal motif; it reads WAQLKKLTQL.

In terms of assembly, forms homodimers, homotrimers, and homotetramers via a C-terminal domain. Associates with XPO1 and with ZNF145.

The protein resides in the cytoplasm. Its subcellular location is the nucleus. It localises to the nucleolus. Its function is as follows. Retroviral replication requires the nuclear export and translation of unspliced, singly-spliced and multiply-spliced derivatives of the initial genomic transcript. Rec interacts with a highly structured RNA element (RcRE) present in the viral 3'LTR and recruits the cellular nuclear export machinery. This permits export to the cytoplasm of unspliced genomic or incompletely spliced subgenomic viral transcripts. This is Endogenous retrovirus group K member 8 Rec protein (ERVK-8) from Homo sapiens (Human).